The chain runs to 351 residues: Protein Tex24 (351 aa).

Disordered regions lie at residues proline 69 to serine 101, proline 117 to lysine 144, and glutamate 275 to methionine 298. Residues histidine 73–arginine 83 show a composition bias toward basic residues. A compositionally biased stretch (basic and acidic residues) spans glutamate 275–histidine 285.

In terms of tissue distribution, specific to testis, where it is expressed in spermatogonia.

It localises to the nucleus. Nuclear factor which might have a role in spermatogenesis. This Mus musculus (Mouse) protein is Protein Tex24.